A 359-amino-acid chain; its full sequence is Phosphoserine aminotransferase (359 aa).

Residue arginine 41 coordinates L-glutamate. Pyridoxal 5'-phosphate is bound by residues tryptophan 101, threonine 151, aspartate 170, and glutamine 193. Lysine 194 carries the post-translational modification N6-(pyridoxal phosphate)lysine. 235 to 236 (NT) provides a ligand contact to pyridoxal 5'-phosphate.

This sequence belongs to the class-V pyridoxal-phosphate-dependent aminotransferase family. SerC subfamily. Homodimer. Pyridoxal 5'-phosphate serves as cofactor.

It is found in the cytoplasm. The catalysed reaction is O-phospho-L-serine + 2-oxoglutarate = 3-phosphooxypyruvate + L-glutamate. The enzyme catalyses 4-(phosphooxy)-L-threonine + 2-oxoglutarate = (R)-3-hydroxy-2-oxo-4-phosphooxybutanoate + L-glutamate. The protein operates within amino-acid biosynthesis; L-serine biosynthesis; L-serine from 3-phospho-D-glycerate: step 2/3. Its pathway is cofactor biosynthesis; pyridoxine 5'-phosphate biosynthesis; pyridoxine 5'-phosphate from D-erythrose 4-phosphate: step 3/5. In terms of biological role, catalyzes the reversible conversion of 3-phosphohydroxypyruvate to phosphoserine and of 3-hydroxy-2-oxo-4-phosphonooxybutanoate to phosphohydroxythreonine. The sequence is that of Phosphoserine aminotransferase from Laribacter hongkongensis (strain HLHK9).